The chain runs to 311 residues: Malate dehydrogenase (311 aa).

Residues 7-12 and D32 contribute to the NAD(+) site; that span reads GAGNVG. Substrate contacts are provided by R82 and R88. NAD(+)-binding positions include N95 and 118–120; that span reads VSN. N120 and R151 together coordinate substrate. H175 serves as the catalytic Proton acceptor.

This sequence belongs to the LDH/MDH superfamily. MDH type 3 family. Homotetramer.

The enzyme catalyses (S)-malate + NAD(+) = oxaloacetate + NADH + H(+). Strongly inhibited by iodoacetic acid and CuCl(2). Completely inhibited by N-ethylmaleimide and HgCl(2). Its function is as follows. Catalyzes the reversible oxidation of malate to oxaloacetate. Can use both NAD and NADP for malate oxidation, but NADPH cannot be used for oxaloacetate reduction. This Flavobacterium frigidimaris protein is Malate dehydrogenase.